The chain runs to 148 residues: HTH-type transcriptional regulator SarZ (148 aa).

Residues 9–139 form the HTH marR-type domain; that stretch reads SKQLCFLFYV…IINNLRNFVS (131 aa). Positions 55–78 form a DNA-binding region, H-T-H motif; that stretch reads IKKLGERVFLDSGTLTPLLKKLEK.

It belongs to the SarZ family.

The protein localises to the cytoplasm. In terms of biological role, activates transcription of virulence factors alpha- and beta hemolysin genes (hla and hlb). Also, activates RNAIII expression, a central regulator transcribed from the agr locus. The sequence is that of HTH-type transcriptional regulator SarZ (sarZ) from Staphylococcus aureus (strain USA300).